A 266-amino-acid chain; its full sequence is Apolipoprotein A-I (266 aa).

Positions 1 to 18 (MKAVVLTLAVLFLTGSQA) are cleaved as a signal peptide. 2 consecutive repeat copies span residues 67–88 (LKLL…EQIG) and 89–110 (PVTQ…QEMN). The segment at 67 to 266 (LKLLDNWDSL…DEATKKLNAQ (200 aa)) is 10 X approximate tandem repeats. M109 carries the post-translational modification Methionine sulfoxide. The stretch at 111–121 (KDLEEVKKKVQ) is one 3; half-length repeat. 5 tandem repeats follow at residues 122–143 (PYLD…QKVA), 144–165 (PLGA…EKLS), 166–187 (PLGE…AQLA), 188–209 (PYSE…EGGG), and 210–231 (ATLT…EKAK). The 9; half-length repeat unit spans residues 232–242 (PALEDLRQGLM). The stretch at 243 to 266 (PVLESFRASLLAAVDEATKKLNAQ) is repeat 10.

The protein belongs to the apolipoprotein A1/A4/E family. As to quaternary structure, homodimer. Interacts with APOA1BP and CLU. Component of a sperm activating protein complex (SPAP), consisting of APOA1, an immunoglobulin heavy chain, an immunoglobulin light chain and albumin. Interacts with NDRG1. Interacts with SCGB3A2. Interacts with NAXE and YJEFN3. Post-translationally, glycosylated. In terms of processing, palmitoylated. Phosphorylation sites are present in the extracellular medium.

It localises to the secreted. Its function is as follows. Participates in the reverse transport of cholesterol from tissues to the liver for excretion by promoting cholesterol efflux from tissues and by acting as a cofactor for the lecithin cholesterol acyltransferase (LCAT). As part of the SPAP complex, activates spermatozoa motility. This is Apolipoprotein A-I (APOA1) from Phoca vitulina (Harbor seal).